Consider the following 1065-residue polypeptide: Inversin (1065 aa).

16 ANK repeats span residues 13-42 (SLASQVHAAAVNGDKGALQRLIVGNSALKD), 47-76 (FGRTPLMYCVLADRLDCADALLKAGADVNK), 80-110 (SQRTALHLAAQKGNYRFMKLLLTRRANWMQK), 113-144 (EEMTPLHLTTRHRSPKCLALLLKFMAPGEVDT), 148-177 (NKQTALHWSAYYNNPEHVKLLIKHDSNIGI), 181-213 (EGKIPLHWAANHKDPSAVHTVRCILDAAPTESL), 220-250 (EGRTPLHFAVADGNVTVVDVLTSYESCNITS), 254-283 (LFRTPLHWAALLGHAQIVHLLLERNKSGTI), 288-317 (QGATPLHYAAQSNFAETVKVFLKHPSVKDD), 321-350 (EGRTSFMWAAGKGSDDVLRTMLSLKSDIDI), 356-385 (YGGTALHAAALSGHVSTVKLLLENNAQVDA), 389-418 (MKHTPLFRACEMGHKDVIQTLIKGGARVDL), 422-451 (DGHSLLHWAALGGNADVCQILIENKINPNV), 455-484 (AGRTPLQCAAYGGYINCMAVLMENNADPNI), 488-517 (EGRTALHWSCNNGYLDAIKLLLDFAAFPNQ), and 523-553 (ERYTPLDYALLGERHEVIQFMLEHGALSIAA). Position 75 is a 3-hydroxyasparagine (N75). The D-box 1 signature appears at 490 to 498 (RTALHWSCN). An IQ 1 domain is found at 555–584 (QDIAAFKIQAVYKGYKVRKAFRDRKNLLMK). The span at 589–616 (RKDAAAKKREEENKRKEAEQQKGRRSPD) shows a compositional bias: basic and acidic residues. Disordered regions lie at residues 589-833 (RKDA…TPRN) and 847-886 (HLPQSTEELRSGARRLETSTLSEDFQVSKETDPAPGPLSG). The segment covering 627-640 (PSTQDVPSRQSRAP) has biased composition (polar residues). S661 is subject to Phosphoserine. The segment covering 677-686 (SSDLQGTNSR) has biased composition (polar residues). Basic and acidic residues-rich tracts occupy residues 687–697 (RPNETAREHSK), 706–715 (RPNEGSDGSR), 723–736 (EKSRGETAGDERCA), 752–762 (GPDEKGEDSRR), 770–786 (HDSHWKPSRRHDTEPKA), and 853–863 (EELRSGARRLE). The D-box 2 signature appears at 909–917 (RKELFRKKN). The region spanning 916–945 (KNKAAAVIQRAWRSYQLRKHLSHLRHMKQL) is the IQ 2 domain. Residues 976–999 (TTAVSKAPKSPSKGTSGTKSTKHS) form a disordered region. Over residues 983-994 (PKSPSKGTSGTK) the composition is skewed to low complexity.

Binds calmodulin via its IQ domains. Interacts with APC2. Interacts with alpha-, beta-, and gamma-catenin. Interacts with N-cadherin (CDH2). Interacts with microtubules. Interacts with NPHP1. Interacts with DVL1, PRICKLE (PRICKLE1 or PRICKLE2) and Strabismus (VANGL1 or VANGL2). Interacts with IQCB1; the interaction likely requires additional interactors. Component of a complex containing at least ANKS6, INVS, NEK8 and NPHP3. ANKS6 may organize complex assembly by linking INVS and NPHP3 to NEK8 and INVS may target the complex to the proximal ciliary axoneme. In terms of processing, may be ubiquitinated via its interaction with APC2. Hydroxylated at Asn-75, most probably by HIF1AN. Widely expressed. Strongly expressed in the primary cilia of renal tubular cells.

The protein resides in the cytoplasm. Its subcellular location is the cytoskeleton. The protein localises to the spindle. It localises to the membrane. It is found in the nucleus. The protein resides in the cell projection. Its subcellular location is the cilium. Required for normal renal development and establishment of left-right axis. Probably acts as a molecular switch between different Wnt signaling pathways. Inhibits the canonical Wnt pathway by targeting cytoplasmic disheveled (DVL1) for degradation by the ubiquitin-proteasome. This suggests that it is required in renal development to oppose the repression of terminal differentiation of tubular epithelial cells by Wnt signaling. Involved in the organization of apical junctions in kidney cells together with NPHP1, NPHP4 and RPGRIP1L/NPHP8. Does not seem to be strictly required for ciliogenesis. The polypeptide is Inversin (INVS) (Homo sapiens (Human)).